Consider the following 276-residue polypeptide: Small ribosomal subunit protein uS3 (276 aa).

A KH type-2 domain is found at 17 to 86; sequence VDEYLAKELD…NPQIDVQDVG (70 aa). A disordered region spans residues 193 to 276; the sequence is FQINAPPKEP…AETHGDIQDR (84 aa). A compositionally biased stretch (low complexity) spans 214-227; it reads EAEPSQAAETQEQQ. Composition is skewed to basic and acidic residues over residues 228–240 and 258–276; these read AGEK…RLLD and PESR…IQDR.

It belongs to the universal ribosomal protein uS3 family. As to quaternary structure, part of the 30S ribosomal subunit.

In terms of biological role, binds the lower part of the 30S subunit head. The sequence is that of Small ribosomal subunit protein uS3 from Methanothrix thermoacetophila (strain DSM 6194 / JCM 14653 / NBRC 101360 / PT) (Methanosaeta thermophila).